A 224-amino-acid chain; its full sequence is Putative adhesin RMA_1308 (224 aa).

Positions M1–A22 are cleaved as a signal peptide.

This chain is Putative adhesin RMA_1308, found in Rickettsia massiliae (strain Mtu5).